We begin with the raw amino-acid sequence, 129 residues long: uncharacterized protein (129 aa).

3 helical membrane passes run 22 to 42 (LASSFSNASTLLSFVFFFFFF), 55 to 75 (VGSFSASASAETLLDFFFFFF), and 88 to 108 (LPFTAASKSSGITFLVFFFFF).

Its subcellular location is the membrane. This is an uncharacterized protein from Saccharomyces cerevisiae (strain ATCC 204508 / S288c) (Baker's yeast).